An 86-amino-acid polypeptide reads, in one-letter code: Exodeoxyribonuclease 7 small subunit (86 aa).

Belongs to the XseB family. Heterooligomer composed of large and small subunits.

The protein localises to the cytoplasm. The catalysed reaction is Exonucleolytic cleavage in either 5'- to 3'- or 3'- to 5'-direction to yield nucleoside 5'-phosphates.. Functionally, bidirectionally degrades single-stranded DNA into large acid-insoluble oligonucleotides, which are then degraded further into small acid-soluble oligonucleotides. This chain is Exodeoxyribonuclease 7 small subunit, found in Bacillus licheniformis (strain ATCC 14580 / DSM 13 / JCM 2505 / CCUG 7422 / NBRC 12200 / NCIMB 9375 / NCTC 10341 / NRRL NRS-1264 / Gibson 46).